Here is a 128-residue protein sequence, read N- to C-terminus: Saitohin (128 aa).

The segment at 77 to 128 (SYSSEESSRNGAEQGRQLSIEGPFQGQNCPSHPAAALPLPMRGESQATSCQV) is disordered.

As to quaternary structure, interacts with PRDX6. As to expression, highest expression in placenta, muscle, fetal brain, and adult brain, with lower expression in heart, kidney, stomach, testis, and adrenal gland. In the central nervous system, highest expression is in temporal lobe, hypothalamus, medulla and spinal cord, with lower expression in other brain regions.

The protein localises to the cytoplasm. It localises to the nucleus. This Homo sapiens (Human) protein is Saitohin (STH).